The sequence spans 1073 residues: MKLLYTEISYSMTEILVKEARAYADKGYRVFYIAPNSLSFEKERSVLALLPEQGSFAITVTRFEQMARYFTLAKAANRQALDDNGLAMIFYRVLMQLQEDELKVFHRLRTDQAFIAQLVELYKELQAANLTAFDLTTLDRPEKQEDLITIMTKAEQLIAQGDYDQSSRLAQLAEAIKSKSLDDELRQTVLVIDGFTRFSAEEEQLLALLNEACEEIVIGAYISQKAYRLAFTKGNLYEASLAFIQQLAQQFQTKPIYTTSEKVFDVSFSRLTQLLEANHDYSKLDWQLSAKDKSKVVIWQALNQKEELEYVAKAIREKLYQGYRYKDMLVLLGDVASYQLQIGPIFEKFEIPYYIGKQEPMSAHPLVQFVESLERGRRYNWRREDIVNLLKSGLFGRFQEGELDQLEQYLVFADIQGFTKFSRPFTLNSSRQYPLPLLNQLRLAVVTPLQQLFKSQKQLGASLLDKLMTFFKTIQLADNFEALAGSRREADREKDEEVWKAFTGILETFYQVFGQEKMTLADCLALIKMGMQTAHYRTVPATLDVVSIKSYDLVEPHSKPFVFAIGLSRSHFPKQTKNTSLISDQERASINEQTASYQRLDVPSFENIKKNHQTALSLFNAATQELVLSLPTSLTNSSDDVSPYLKELIALGVPVIEKGKNRLSHSAADIGNYKALLSRLVAINRQGIADDMTSEDRNFWTVALRYLKRRLADEQLSLPAFEHHLTTKPVAPEVIETRFPSHQPLSLSSSALTVFYNNQYKYFLKYVLGLQEPESIHPDARIHGQYLHRIFELVTKDRTDAAFDQKLGAAIAAVNQQSAFQQVYQADAEGRYSLEVLKGIAYSTAPVLNLNQGMQVAKQEEAFELALGHQALIRGVIDRIDQLADGRLGIVDYKSSARVFDIGAFYNGLSPQLVTYLAALKNKGQGLFGAMYLHMQEPRLSLSDFKVLDDQLVAAAYKELTYKGIFLAQAKEYLANGSYHLNNTLYETDELETLLAYNEQLYLSAVKQIKTGHFLINPYTADGKSVQGDQLKAITRFEADLDLGYARRLVVLPVKERRQAFLTRMNEEIKHED.

Belongs to the helicase family. AddB/RexB type 2 subfamily. In terms of assembly, heterodimer of AddA and RexB. The cofactor is Mg(2+).

Functionally, the heterodimer acts as both an ATP-dependent DNA helicase and an ATP-dependent, dual-direction single-stranded exonuclease. Recognizes the chi site generating a DNA molecule suitable for the initiation of homologous recombination. This subunit has 5' -&gt; 3' nuclease activity but not helicase activity. The sequence is that of ATP-dependent helicase/deoxyribonuclease subunit B from Streptococcus equi subsp. zooepidemicus (strain H70).